Consider the following 249-residue polypeptide: Ubiquinone biosynthesis O-methyltransferase (249 aa).

Positions 1 to 23 (MTSPSQVLPASAGKPTGPNADPK) are disordered. Positions 52, 71, 92, and 136 each coordinate S-adenosyl-L-methionine.

It belongs to the methyltransferase superfamily. UbiG/COQ3 family.

The catalysed reaction is a 3-demethylubiquinol + S-adenosyl-L-methionine = a ubiquinol + S-adenosyl-L-homocysteine + H(+). It catalyses the reaction a 3-(all-trans-polyprenyl)benzene-1,2-diol + S-adenosyl-L-methionine = a 2-methoxy-6-(all-trans-polyprenyl)phenol + S-adenosyl-L-homocysteine + H(+). The protein operates within cofactor biosynthesis; ubiquinone biosynthesis. O-methyltransferase that catalyzes the 2 O-methylation steps in the ubiquinone biosynthetic pathway. In Cupriavidus pinatubonensis (strain JMP 134 / LMG 1197) (Cupriavidus necator (strain JMP 134)), this protein is Ubiquinone biosynthesis O-methyltransferase.